The sequence spans 528 residues: Glucose-6-phosphate isomerase (528 aa).

Glu-322 serves as the catalytic Proton donor. Catalysis depends on residues His-351 and Lys-455.

It belongs to the GPI family.

The protein localises to the cytoplasm. The enzyme catalyses alpha-D-glucose 6-phosphate = beta-D-fructose 6-phosphate. It participates in carbohydrate biosynthesis; gluconeogenesis. The protein operates within carbohydrate degradation; glycolysis; D-glyceraldehyde 3-phosphate and glycerone phosphate from D-glucose: step 2/4. Its function is as follows. Catalyzes the reversible isomerization of glucose-6-phosphate to fructose-6-phosphate. The protein is Glucose-6-phosphate isomerase of Nostoc punctiforme (strain ATCC 29133 / PCC 73102).